A 204-amino-acid polypeptide reads, in one-letter code: MQMIHKEGWIEVICGSMFSGKSEELIRRVRRATYGRLKVQVFKPAIDNRYSEQEVVSHNGNKVCAIPVERAMSILEQWSEDTDIVAIDEVQFFDEDVIGVVDYLADHGVRVICAGLDQDFRGEPFEPTRTLMAMAEYVTKLQAICPVCGSPASRTQRLIDGKPASYHDPIILVGAAEAYEPRCRHCHQVTNKPSKLPETASSGE.

ATP contacts are provided by residues Gly-15 to Ser-22 and Asp-88 to Gln-91. Residue Glu-89 is the Proton acceptor of the active site. Zn(2+) is bound by residues Cys-145, Cys-148, Cys-183, and Cys-186.

This sequence belongs to the thymidine kinase family. Homotetramer.

The protein localises to the cytoplasm. The catalysed reaction is thymidine + ATP = dTMP + ADP + H(+). This chain is Thymidine kinase, found in Halalkalibacterium halodurans (strain ATCC BAA-125 / DSM 18197 / FERM 7344 / JCM 9153 / C-125) (Bacillus halodurans).